The chain runs to 60 residues: Large ribosomal subunit protein bL32 (60 aa).

A disordered region spans residues 1-60 (MAVQQNKKTPSKRGMHRSHDFLVAPQLSVEPTTGETHMRHHISPNGFYRGRKVLKTKNDE). A compositionally biased stretch (basic residues) spans 49-60 (RGRKVLKTKNDE).

It belongs to the bacterial ribosomal protein bL32 family.

The polypeptide is Large ribosomal subunit protein bL32 (Janthinobacterium sp. (strain Marseille) (Minibacterium massiliensis)).